The sequence spans 374 residues: Chaperone protein DnaJ (374 aa).

Positions 5 to 70 constitute a J domain; it reads DFYEILGVGK…QKRDAYDRYG (66 aa). Residues 29–50 form a disordered region; it reads AMKHHPDRNPDSKGAEDKFKEA. Residues 35–50 are compositionally biased toward basic and acidic residues; that stretch reads DRNPDSKGAEDKFKEA. Residues 134–212 form a CR-type zinc finger; sequence GYDTTIRVPS…CSGAGKIKRN (79 aa). Zn(2+)-binding residues include cysteine 147, cysteine 150, cysteine 164, cysteine 167, cysteine 186, cysteine 189, cysteine 200, and cysteine 203. 4 CXXCXGXG motif repeats span residues 147 to 154, 164 to 171, 186 to 193, and 200 to 207; these read CETCDGSG, CTTCGGHG, CPKCHGSG, and CGTCSGAG.

The protein belongs to the DnaJ family. Homodimer. It depends on Zn(2+) as a cofactor.

The protein localises to the cytoplasm. Functionally, participates actively in the response to hyperosmotic and heat shock by preventing the aggregation of stress-denatured proteins and by disaggregating proteins, also in an autonomous, DnaK-independent fashion. Unfolded proteins bind initially to DnaJ; upon interaction with the DnaJ-bound protein, DnaK hydrolyzes its bound ATP, resulting in the formation of a stable complex. GrpE releases ADP from DnaK; ATP binding to DnaK triggers the release of the substrate protein, thus completing the reaction cycle. Several rounds of ATP-dependent interactions between DnaJ, DnaK and GrpE are required for fully efficient folding. Also involved, together with DnaK and GrpE, in the DNA replication of plasmids through activation of initiation proteins. The protein is Chaperone protein DnaJ of Janthinobacterium sp. (strain Marseille) (Minibacterium massiliensis).